The following is a 378-amino-acid chain: TelA-like protein SAB1262 (378 aa).

The protein belongs to the TelA family.

The sequence is that of TelA-like protein SAB1262 from Staphylococcus aureus (strain bovine RF122 / ET3-1).